Consider the following 683-residue polypeptide: Heat shock protein homolog ECU03_0520 (683 aa).

The protein belongs to the heat shock protein 70 family.

It is found in the cytoplasm. The protein is Heat shock protein homolog ECU03_0520 of Encephalitozoon cuniculi (strain GB-M1) (Microsporidian parasite).